The sequence spans 331 residues: Protein RecA (331 aa).

Residue 61 to 68 coordinates ATP; that stretch reads GPESSGKT.

This sequence belongs to the RecA family.

The protein resides in the cytoplasm. Its function is as follows. Can catalyze the hydrolysis of ATP in the presence of single-stranded DNA, the ATP-dependent uptake of single-stranded DNA by duplex DNA, and the ATP-dependent hybridization of homologous single-stranded DNAs. It interacts with LexA causing its activation and leading to its autocatalytic cleavage. The protein is Protein RecA of Mycoplasma mobile (strain ATCC 43663 / 163K / NCTC 11711) (Mesomycoplasma mobile).